A 366-amino-acid chain; its full sequence is tRNA/tmRNA (uracil-C(5))-methyltransferase (366 aa).

5 residues coordinate S-adenosyl-L-methionine: Gln-190, Tyr-218, Asn-223, Glu-239, and Asp-299. The Nucleophile role is filled by Cys-324. The Proton acceptor role is filled by Glu-358.

Belongs to the class I-like SAM-binding methyltransferase superfamily. RNA M5U methyltransferase family. TrmA subfamily.

It catalyses the reaction uridine(54) in tRNA + S-adenosyl-L-methionine = 5-methyluridine(54) in tRNA + S-adenosyl-L-homocysteine + H(+). It carries out the reaction uridine(341) in tmRNA + S-adenosyl-L-methionine = 5-methyluridine(341) in tmRNA + S-adenosyl-L-homocysteine + H(+). In terms of biological role, dual-specificity methyltransferase that catalyzes the formation of 5-methyluridine at position 54 (m5U54) in all tRNAs, and that of position 341 (m5U341) in tmRNA (transfer-mRNA). In Escherichia coli O81 (strain ED1a), this protein is tRNA/tmRNA (uracil-C(5))-methyltransferase.